The chain runs to 212 residues: Large ribosomal subunit protein uL3 (212 aa).

Residue Gln-153 is modified to N5-methylglutamine.

Belongs to the universal ribosomal protein uL3 family. Part of the 50S ribosomal subunit. Forms a cluster with proteins L14 and L19. Methylated by PrmB.

Its function is as follows. One of the primary rRNA binding proteins, it binds directly near the 3'-end of the 23S rRNA, where it nucleates assembly of the 50S subunit. The chain is Large ribosomal subunit protein uL3 from Dechloromonas aromatica (strain RCB).